The primary structure comprises 506 residues: ATP synthase subunit alpha (506 aa).

Residue 170-177 (GDRQTGKT) participates in ATP binding.

It belongs to the ATPase alpha/beta chains family. In terms of assembly, F-type ATPases have 2 components, CF(1) - the catalytic core - and CF(0) - the membrane proton channel. CF(1) has five subunits: alpha(3), beta(3), gamma(1), delta(1), epsilon(1). CF(0) has four main subunits: a(1), b(1), b'(1) and c(9-12).

The protein resides in the cellular thylakoid membrane. The catalysed reaction is ATP + H2O + 4 H(+)(in) = ADP + phosphate + 5 H(+)(out). Produces ATP from ADP in the presence of a proton gradient across the membrane. The alpha chain is a regulatory subunit. This Parasynechococcus marenigrum (strain WH8102) protein is ATP synthase subunit alpha.